The primary structure comprises 311 residues: Aspartate carbamoyltransferase catalytic subunit (311 aa).

Carbamoyl phosphate is bound by residues arginine 52 and threonine 53. Lysine 80 is a binding site for L-aspartate. Arginine 102, histidine 131, and glutamine 134 together coordinate carbamoyl phosphate. The L-aspartate site is built by arginine 164 and arginine 216. 2 residues coordinate carbamoyl phosphate: alanine 259 and proline 260.

Belongs to the aspartate/ornithine carbamoyltransferase superfamily. ATCase family. As to quaternary structure, heterododecamer (2C3:3R2) of six catalytic PyrB chains organized as two trimers (C3), and six regulatory PyrI chains organized as three dimers (R2).

The catalysed reaction is carbamoyl phosphate + L-aspartate = N-carbamoyl-L-aspartate + phosphate + H(+). It functions in the pathway pyrimidine metabolism; UMP biosynthesis via de novo pathway; (S)-dihydroorotate from bicarbonate: step 2/3. Its function is as follows. Catalyzes the condensation of carbamoyl phosphate and aspartate to form carbamoyl aspartate and inorganic phosphate, the committed step in the de novo pyrimidine nucleotide biosynthesis pathway. The sequence is that of Aspartate carbamoyltransferase catalytic subunit from Lactiplantibacillus plantarum (strain ATCC BAA-793 / NCIMB 8826 / WCFS1) (Lactobacillus plantarum).